Consider the following 328-residue polypeptide: L-lactate dehydrogenase (328 aa).

NAD(+) contacts are provided by residues V18, E39, K46, Y71, and 85–86; that span reads GA. Residues Q88 and R94 each coordinate substrate. Residues S107, 124-126, and S149 each bind NAD(+); that span reads AAN. 126-129 serves as a coordination point for substrate; sequence NPVD. Substrate is bound at residue 154-157; the sequence is DSAR. R159 and H174 together coordinate beta-D-fructose 1,6-bisphosphate. Residue H181 is the Proton acceptor of the active site. At Y226 the chain carries Phosphotyrosine. T235 serves as a coordination point for substrate.

Belongs to the LDH/MDH superfamily. LDH family. In terms of assembly, homotetramer.

It is found in the cytoplasm. It carries out the reaction (S)-lactate + NAD(+) = pyruvate + NADH + H(+). It functions in the pathway fermentation; pyruvate fermentation to lactate; (S)-lactate from pyruvate: step 1/1. Its activity is regulated as follows. Allosterically activated by fructose 1,6-bisphosphate (FBP). Its function is as follows. Catalyzes the conversion of lactate to pyruvate. The protein is L-lactate dehydrogenase of Streptococcus pneumoniae (strain ATCC BAA-255 / R6).